Consider the following 486-residue polypeptide: Cobyric acid synthase (486 aa).

Residues 248–439 (MLRVVVPVLP…VHGLFDTPAA (192 aa)) enclose the GATase cobBQ-type domain. Catalysis depends on cysteine 329, which acts as the Nucleophile. The active site involves histidine 431.

Belongs to the CobB/CobQ family. CobQ subfamily.

Its pathway is cofactor biosynthesis; adenosylcobalamin biosynthesis. In terms of biological role, catalyzes amidations at positions B, D, E, and G on adenosylcobyrinic A,C-diamide. NH(2) groups are provided by glutamine, and one molecule of ATP is hydrogenolyzed for each amidation. This Paraburkholderia phytofirmans (strain DSM 17436 / LMG 22146 / PsJN) (Burkholderia phytofirmans) protein is Cobyric acid synthase.